Consider the following 87-residue polypeptide: Envelope glycoprotein N (87 aa).

A signal peptide spans 1–24 (MGSITASFILITMQILFFCEDSSG). Residues 25 to 48 (EPNFAERNFWHASCSARGVYIDGS) lie on the Virion surface side of the membrane. Residues 49–69 (MITTLFFYASLLGVCVALISL) traverse the membrane as a helical segment. Residues 70 to 87 (AYHACFRLFTRSVLRSTW) are Intravirion-facing.

The protein belongs to the herpesviridae glycoprotein N family. Interacts (via N-terminus) with gM (via N-terminus). The gM-gN heterodimer forms the gCII complex.

The protein localises to the virion membrane. Its subcellular location is the host membrane. It localises to the host Golgi apparatus. The protein resides in the host trans-Golgi network. Envelope glycoprotein necessary for proper maturation of gM and modulation of its membrane fusion activity. Also plays a critical role in virion morphogenesis. The sequence is that of Envelope glycoprotein N from Varicella-zoster virus (strain Dumas) (HHV-3).